Here is a 260-residue protein sequence, read N- to C-terminus: Triosephosphate isomerase (260 aa).

11–13 (NWK) is a substrate binding site. His-103 acts as the Electrophile in catalysis. The active-site Proton acceptor is the Glu-175. Residues Gly-181, Ser-220, and 241–242 (GG) contribute to the substrate site.

Belongs to the triosephosphate isomerase family. As to quaternary structure, homodimer.

The protein localises to the cytoplasm. It catalyses the reaction D-glyceraldehyde 3-phosphate = dihydroxyacetone phosphate. It functions in the pathway carbohydrate biosynthesis; gluconeogenesis. It participates in carbohydrate degradation; glycolysis; D-glyceraldehyde 3-phosphate from glycerone phosphate: step 1/1. Involved in the gluconeogenesis. Catalyzes stereospecifically the conversion of dihydroxyacetone phosphate (DHAP) to D-glyceraldehyde-3-phosphate (G3P). This is Triosephosphate isomerase from Shewanella frigidimarina (strain NCIMB 400).